The primary structure comprises 421 residues: Gamma-glutamyl phosphate reductase (421 aa).

This sequence belongs to the gamma-glutamyl phosphate reductase family.

Its subcellular location is the cytoplasm. It catalyses the reaction L-glutamate 5-semialdehyde + phosphate + NADP(+) = L-glutamyl 5-phosphate + NADPH + H(+). The protein operates within amino-acid biosynthesis; L-proline biosynthesis; L-glutamate 5-semialdehyde from L-glutamate: step 2/2. Its function is as follows. Catalyzes the NADPH-dependent reduction of L-glutamate 5-phosphate into L-glutamate 5-semialdehyde and phosphate. The product spontaneously undergoes cyclization to form 1-pyrroline-5-carboxylate. This is Gamma-glutamyl phosphate reductase from Bordetella petrii (strain ATCC BAA-461 / DSM 12804 / CCUG 43448).